The chain runs to 432 residues: Trigger factor (432 aa).

A PPIase FKBP-type domain is found at 161–246 (EDRVTIDFTG…LKKVEERELP (86 aa)).

It belongs to the FKBP-type PPIase family. Tig subfamily.

It localises to the cytoplasm. It carries out the reaction [protein]-peptidylproline (omega=180) = [protein]-peptidylproline (omega=0). Functionally, involved in protein export. Acts as a chaperone by maintaining the newly synthesized protein in an open conformation. Functions as a peptidyl-prolyl cis-trans isomerase. This is Trigger factor from Klebsiella pneumoniae (strain 342).